The following is a 164-amino-acid chain: Thiol peroxidase (164 aa).

Positions 16 to 162 (LQVGDIAKDF…YEAAINAAKI (147 aa)) constitute a Thioredoxin domain. Residue Cys58 is the Cysteine sulfenic acid (-SOH) intermediate of the active site. Cys58 and Cys92 are disulfide-bonded.

It belongs to the peroxiredoxin family. Tpx subfamily. Homodimer.

The enzyme catalyses a hydroperoxide + [thioredoxin]-dithiol = an alcohol + [thioredoxin]-disulfide + H2O. Functionally, thiol-specific peroxidase that catalyzes the reduction of hydrogen peroxide and organic hydroperoxides to water and alcohols, respectively. Plays a role in cell protection against oxidative stress by detoxifying peroxides. The chain is Thiol peroxidase from Streptococcus agalactiae serotype III (strain NEM316).